A 116-amino-acid chain; its full sequence is G antigen 2D (116 aa).

The tract at residues 1 to 116 (MSWRGRSTYR…PEEGEKQSQC (116 aa)) is disordered. 2 stretches are compositionally biased toward acidic residues: residues 31 to 44 (FSDEVEPATPEEGE) and 86 to 95 (ECEDGPDGQE). Positions 102–116 (EEVKTPEEGEKQSQC) are enriched in basic and acidic residues.

The protein belongs to the GAGE family. In terms of tissue distribution, not expressed in normal tissues, except in testis, but expressed by a large proportion of tumors of various histological origins.

In Homo sapiens (Human), this protein is G antigen 2D (GAGE2D).